The primary structure comprises 318 residues: Glutathione synthetase (318 aa).

Positions 129–314 (KLAITEFPDL…VPEMFAVALE (186 aa)) constitute an ATP-grasp domain. Residue 155–211 (HAAQGDVIVKPLDGMGGTGIFRLQRSEPNLNAILETLTDNGTRTIMAQRYIPEIVKG) participates in ATP binding. Mg(2+) contacts are provided by Glu-285 and Asn-287.

Belongs to the prokaryotic GSH synthase family. Requires Mg(2+) as cofactor. Mn(2+) is required as a cofactor.

It carries out the reaction gamma-L-glutamyl-L-cysteine + glycine + ATP = glutathione + ADP + phosphate + H(+). The protein operates within sulfur metabolism; glutathione biosynthesis; glutathione from L-cysteine and L-glutamate: step 2/2. This Bordetella bronchiseptica (strain ATCC BAA-588 / NCTC 13252 / RB50) (Alcaligenes bronchisepticus) protein is Glutathione synthetase.